We begin with the raw amino-acid sequence, 131 residues long: MPPKGKSGSGKGGKGKAASGSESSEKKAQGPKGGGNAVKVRHILCEKHGKILEAMEKLKSGMKFNEVAAQYSEDKARQGGDLGWMTRGSMVGPFQEAAFALPISVLDKPVFTDPPVKTKFGYHIIMVEGRK.

Residues 1–25 (MPPKGKSGSGKGGKGKAASGSESSE) are necessary for nuclear localization and DNA-binding. A disordered region spans residues 1-37 (MPPKGKSGSGKGGKGKAASGSESSEKKAQGPKGGGNA). Residues 1 to 41 (MPPKGKSGSGKGGKGKAASGSESSEKKAQGPKGGGNAVKVR) form a necessary for association with the pre-rRNP complexes region. Position 19 is a phosphoserine; by CK2 (S19). The PpiC domain maps to 35-129 (GNAVKVRHIL…FGYHIIMVEG (95 aa)).

Belongs to the PpiC/parvulin rotamase family. PIN4 subfamily. In terms of assembly, found in pre-ribosomal ribonucleoprotein (pre-rRNP) complexes. Phosphorylated. Phosphorylation occurs both in the nucleus and the cytoplasm. Phosphorylation at Ser-19 does not affect its PPIase activity but is required for nuclear localization, and the dephosphorylation is a prerequisite for the binding to DNA. The unphosphorylated form associates with the pre-rRNP complexes in the nucleus.

The protein resides in the nucleus. It localises to the nucleolus. It is found in the cytoplasm. Its subcellular location is the cytoskeleton. The protein localises to the spindle. It carries out the reaction [protein]-peptidylproline (omega=180) = [protein]-peptidylproline (omega=0). Its function is as follows. Involved as a ribosomal RNA processing factor in ribosome biogenesis. Binds to tightly bent AT-rich stretches of double-stranded DNA. This Bos taurus (Bovine) protein is Peptidyl-prolyl cis-trans isomerase NIMA-interacting 4 (PIN4).